The primary structure comprises 214 residues: Small ribosomal subunit protein uS2 (214 aa).

This sequence belongs to the universal ribosomal protein uS2 family.

The sequence is that of Small ribosomal subunit protein uS2 from Thermofilum pendens (strain DSM 2475 / Hrk 5).